Reading from the N-terminus, the 321-residue chain is Lipoyl synthase (321 aa).

The [4Fe-4S] cluster site is built by Cys-68, Cys-73, Cys-79, Cys-94, Cys-98, Cys-101, and Ser-308. Positions 80 to 297 (FNHGTATFMI…KDYAEEIGFT (218 aa)) constitute a Radical SAM core domain.

It belongs to the radical SAM superfamily. Lipoyl synthase family. [4Fe-4S] cluster is required as a cofactor.

The protein localises to the cytoplasm. It catalyses the reaction [[Fe-S] cluster scaffold protein carrying a second [4Fe-4S](2+) cluster] + N(6)-octanoyl-L-lysyl-[protein] + 2 oxidized [2Fe-2S]-[ferredoxin] + 2 S-adenosyl-L-methionine + 4 H(+) = [[Fe-S] cluster scaffold protein] + N(6)-[(R)-dihydrolipoyl]-L-lysyl-[protein] + 4 Fe(3+) + 2 hydrogen sulfide + 2 5'-deoxyadenosine + 2 L-methionine + 2 reduced [2Fe-2S]-[ferredoxin]. The protein operates within protein modification; protein lipoylation via endogenous pathway; protein N(6)-(lipoyl)lysine from octanoyl-[acyl-carrier-protein]: step 2/2. Catalyzes the radical-mediated insertion of two sulfur atoms into the C-6 and C-8 positions of the octanoyl moiety bound to the lipoyl domains of lipoate-dependent enzymes, thereby converting the octanoylated domains into lipoylated derivatives. The sequence is that of Lipoyl synthase from Shewanella loihica (strain ATCC BAA-1088 / PV-4).